The following is a 1342-amino-acid chain: DNA-directed RNA polymerase subunit beta (1342 aa).

Belongs to the RNA polymerase beta chain family. As to quaternary structure, the RNAP catalytic core consists of 2 alpha, 1 beta, 1 beta' and 1 omega subunit. When a sigma factor is associated with the core the holoenzyme is formed, which can initiate transcription.

The enzyme catalyses RNA(n) + a ribonucleoside 5'-triphosphate = RNA(n+1) + diphosphate. Functionally, DNA-dependent RNA polymerase catalyzes the transcription of DNA into RNA using the four ribonucleoside triphosphates as substrates. The polypeptide is DNA-directed RNA polymerase subunit beta (Histophilus somni (strain 129Pt) (Haemophilus somnus)).